The sequence spans 278 residues: Shikimate dehydrogenase (NADP(+)) (278 aa).

Shikimate is bound by residues 19-21 (SLS) and threonine 66. Catalysis depends on lysine 70, which acts as the Proton acceptor. NADP(+) is bound at residue aspartate 82. Positions 91 and 107 each coordinate shikimate. NADP(+) is bound by residues 133-137 (GSGGA), 157-162 (NRTRAR), and isoleucine 222. Tyrosine 224 is a binding site for shikimate. Glycine 245 serves as a coordination point for NADP(+).

It belongs to the shikimate dehydrogenase family. In terms of assembly, homodimer.

It carries out the reaction shikimate + NADP(+) = 3-dehydroshikimate + NADPH + H(+). Its pathway is metabolic intermediate biosynthesis; chorismate biosynthesis; chorismate from D-erythrose 4-phosphate and phosphoenolpyruvate: step 4/7. Its function is as follows. Involved in the biosynthesis of the chorismate, which leads to the biosynthesis of aromatic amino acids. Catalyzes the reversible NADPH linked reduction of 3-dehydroshikimate (DHSA) to yield shikimate (SA). The sequence is that of Shikimate dehydrogenase (NADP(+)) from Jannaschia sp. (strain CCS1).